Reading from the N-terminus, the 372-residue chain is MQHESPIIRRKSTRIYVGDVPIGDGAPIAVQSMTNTRTTDVEATVAQIRALEKVGADIVRVSVPTMDAAEAFKLIKQQVSVPLVADIHFDYRIALKVAEYGVDCLRINPGNIGNEERIRSVVDCARDKNIPIRIGVNGGSLEKDLQMKYGEPTPEALVESAMRHVDHLDRLNFDQFKVSVKASDVFLAVDSYRLLAKQIDQPLHLGITEAGGARAGAVKSSVGLGMLLAEGIGDTLRISLAADPVEEIKVGFDILKSLRIRSRGINFIACPSCSRQEFDVINTVNALEERLEDIITPMDVSIIGCVVNGPGEAEVSHLGLAGSNKKSAFYEDGKRQKERFDNDDLVNQLEAKIRAKASVLDQANRIDIKQED.

Residues Cys270, Cys273, Cys305, and Glu312 each coordinate [4Fe-4S] cluster.

This sequence belongs to the IspG family. The cofactor is [4Fe-4S] cluster.

The enzyme catalyses (2E)-4-hydroxy-3-methylbut-2-enyl diphosphate + oxidized [flavodoxin] + H2O + 2 H(+) = 2-C-methyl-D-erythritol 2,4-cyclic diphosphate + reduced [flavodoxin]. It functions in the pathway isoprenoid biosynthesis; isopentenyl diphosphate biosynthesis via DXP pathway; isopentenyl diphosphate from 1-deoxy-D-xylulose 5-phosphate: step 5/6. In terms of biological role, converts 2C-methyl-D-erythritol 2,4-cyclodiphosphate (ME-2,4cPP) into 1-hydroxy-2-methyl-2-(E)-butenyl 4-diphosphate. The polypeptide is 4-hydroxy-3-methylbut-2-en-1-yl diphosphate synthase (flavodoxin) (Vibrio campbellii (strain ATCC BAA-1116)).